We begin with the raw amino-acid sequence, 615 residues long: RUN domain-containing protein 1 (615 aa).

The tract at residues 15–41 is disordered; it reads TAVGPKAKDEEEEEEEEESLPPCETVR. Residues 24–33 show a composition bias toward acidic residues; it reads EEEEEEEEES. Ser-73 carries the phosphoserine modification. 2 coiled-coil regions span residues 76–102 and 163–238; these read DATV…LSSH and RVRG…NLNE. The disordered stretch occupies residues 147-180; sequence DPCGGDESDVLPGDRPRVRGEDQSEQEKRERLET. A compositionally biased stretch (basic and acidic residues) spans 158 to 180; that stretch reads PGDRPRVRGEDQSEQEKRERLET. Residues 423-604 form the RUN domain; sequence ELTTVVRKEL…LKFSLPVDLA (182 aa). Phosphoserine is present on Ser-499.

May play a role as p53/TP53 inhibitor and thus may have oncogenic activity. In Mus musculus (Mouse), this protein is RUN domain-containing protein 1 (Rundc1).